The primary structure comprises 43 residues: Structural protein ORF5a (43 aa).

A helical membrane pass occupies residues 2–22 (FSQIGAFLDSALLLLVAFFAV).

It belongs to the arteriviridae ORF5a protein family. In terms of assembly, interacts with proteins GP2B and GP4.

Its subcellular location is the virion. It localises to the host cell membrane. Minor virion component that plays an essential role in virus infectivity. This is Structural protein ORF5a from Sus scrofa (Pig).